Reading from the N-terminus, the 313-residue chain is D-beta-D-heptose 7-phosphate kinase (313 aa).

196-199 (NRAE) lines the ATP pocket. D264 is a catalytic residue.

It carries out the reaction D-glycero-beta-D-manno-heptose 7-phosphate + ATP = D-glycero-beta-D-manno-heptose 1,7-bisphosphate + ADP + H(+). It functions in the pathway nucleotide-sugar biosynthesis; ADP-L-glycero-beta-D-manno-heptose biosynthesis; ADP-L-glycero-beta-D-manno-heptose from D-glycero-beta-D-manno-heptose 7-phosphate: step 1/4. It participates in bacterial outer membrane biogenesis; LPS core biosynthesis. Its function is as follows. Catalyzes the phosphorylation of D-glycero-D-manno-heptose 7-phosphate at the C-1 position to selectively form D-glycero-beta-D-manno-heptose-1,7-bisphosphate. The protein is D-beta-D-heptose 7-phosphate kinase (rfaE) of Bordetella bronchiseptica (strain ATCC BAA-588 / NCTC 13252 / RB50) (Alcaligenes bronchisepticus).